An 801-amino-acid polypeptide reads, in one-letter code: Probable inorganic carbon transporter subunit DabA (801 aa).

4 residues coordinate Zn(2+): C298, D300, H481, and C496. Residues R575–E596 are disordered.

This sequence belongs to the inorganic carbon transporter (TC 9.A.2) DabA family. In terms of assembly, forms a complex with DabB. It depends on Zn(2+) as a cofactor.

Its subcellular location is the cell membrane. Functionally, part of an energy-coupled inorganic carbon pump. In Haloarcula marismortui (strain ATCC 43049 / DSM 3752 / JCM 8966 / VKM B-1809) (Halobacterium marismortui), this protein is Probable inorganic carbon transporter subunit DabA.